We begin with the raw amino-acid sequence, 399 residues long: Elongation factor Tu (399 aa).

The tr-type G domain occupies 10 to 209 (KPHVNIGTIG…EVDRYIPTPE (200 aa)). The interval 19–26 (GHVDHGKT) is G1. A GTP-binding site is contributed by 19-26 (GHVDHGKT). Mg(2+) is bound at residue Thr-26. The G2 stretch occupies residues 60 to 64 (GITIA). The interval 81–84 (DCPG) is G3. GTP contacts are provided by residues 81 to 85 (DCPGH) and 136 to 139 (NKED). Positions 136–139 (NKED) are G4. The tract at residues 174–176 (SAL) is G5.

Belongs to the TRAFAC class translation factor GTPase superfamily. Classic translation factor GTPase family. EF-Tu/EF-1A subfamily. As to quaternary structure, monomer.

It is found in the cytoplasm. The enzyme catalyses GTP + H2O = GDP + phosphate + H(+). GTP hydrolase that promotes the GTP-dependent binding of aminoacyl-tRNA to the A-site of ribosomes during protein biosynthesis. The chain is Elongation factor Tu from Wolinella succinogenes (strain ATCC 29543 / DSM 1740 / CCUG 13145 / JCM 31913 / LMG 7466 / NCTC 11488 / FDC 602W) (Vibrio succinogenes).